A 238-amino-acid polypeptide reads, in one-letter code: Uridylate kinase (238 aa).

An ATP-binding site is contributed by 12-15 (KLSG). G54 contributes to the UMP binding site. Positions 55 and 59 each coordinate ATP. Residues D74 and 135 to 142 (TGNPFFTT) contribute to the UMP site. 3 residues coordinate ATP: T162, Y168, and D171.

The protein belongs to the UMP kinase family. In terms of assembly, homohexamer.

It is found in the cytoplasm. The enzyme catalyses UMP + ATP = UDP + ADP. It functions in the pathway pyrimidine metabolism; CTP biosynthesis via de novo pathway; UDP from UMP (UMPK route): step 1/1. Its activity is regulated as follows. Inhibited by UTP. In terms of biological role, catalyzes the reversible phosphorylation of UMP to UDP. The polypeptide is Uridylate kinase (Herminiimonas arsenicoxydans).